The following is a 156-amino-acid chain: Ribosome maturation factor RimP (156 aa).

It belongs to the RimP family.

The protein resides in the cytoplasm. Functionally, required for maturation of 30S ribosomal subunits. The protein is Ribosome maturation factor RimP of Microcystis aeruginosa (strain NIES-843 / IAM M-2473).